Consider the following 230-residue polypeptide: MTEDDRIKLEPSWKHALRDQFEQPYMAQLREFLRQEHAAGKEIYPPGPLIFNALNSTPLDKVKVVILGQDPYHGPGQAHGLCFSVQPGVPAPPSLVNIYKELKRDLNIDIPNHGYLQSWADQGVLMLNTTMTVERANANAHAGKGWQFFTDRIIEVVSEHQPHLVFLLWGAHAQGKQKLIDATKHLVLTSVHPSPLSAYRGFLGCGHFSRTNKFLEQNGETPINWVLPPA.

Catalysis depends on aspartate 70, which acts as the Proton acceptor.

The protein belongs to the uracil-DNA glycosylase (UDG) superfamily. UNG family.

It is found in the cytoplasm. It carries out the reaction Hydrolyzes single-stranded DNA or mismatched double-stranded DNA and polynucleotides, releasing free uracil.. Excises uracil residues from the DNA which can arise as a result of misincorporation of dUMP residues by DNA polymerase or due to deamination of cytosine. This is Uracil-DNA glycosylase from Pseudomonas fluorescens (strain SBW25).